We begin with the raw amino-acid sequence, 252 residues long: Trans-aconitate 2-methyltransferase (252 aa).

It belongs to the methyltransferase superfamily. Tam family.

The protein localises to the cytoplasm. The catalysed reaction is trans-aconitate + S-adenosyl-L-methionine = (E)-3-(methoxycarbonyl)pent-2-enedioate + S-adenosyl-L-homocysteine. Functionally, catalyzes the S-adenosylmethionine monomethyl esterification of trans-aconitate. The polypeptide is Trans-aconitate 2-methyltransferase (Escherichia coli (strain 55989 / EAEC)).